The chain runs to 317 residues: TPR repeat-containing thioredoxin TDX (317 aa).

Residues 1-48 (MATAGASSFEDEIMESDIELEGEAVEPDNDPPQKMGDPSVEVSDEKRD) are disordered. The span at 9 to 29 (FEDEIMESDIELEGEAVEPDN) shows a compositional bias: acidic residues. TPR repeat units lie at residues 50 to 83 (AQLCKNKGVDAFSEGKLDEAIEHLTEAIVLNPTS), 85 to 117 (IAYATRAVIFVKSKKPNAAIRDADAALKINPDS), and 119 to 151 (KGYKSRGMAKAMLGKWEEAAQDLRMAAKLDYDE). Residues 189 to 316 (EKQRKHAEEV…LERKVAQHGS (128 aa)) form the Thioredoxin domain. Residues Cys-242 and Cys-245 each act as nucleophile in the active site. Cys-242 and Cys-245 form a disulfide bridge.

The protein belongs to the thioredoxin family.

In terms of biological role, probable thiol-disulfide oxidoreductase that may participate in various redox reactions and act as chaperone under heat shock. May interact with HSP70 proteins through the TPR repeats. The sequence is that of TPR repeat-containing thioredoxin TDX from Oryza sativa subsp. japonica (Rice).